Reading from the N-terminus, the 159-residue chain is MDAIATIVELVREVVEPVIEAPFELVDIEYGKIGSDMILSIFVDKPEGITLNDTADLTEIISPVLDTIKPDPFPEQYFLEITSPGLERPLKTKDAVAGAVGKYIHVGLYQAIDKQKVFEGTLLAFEEDELTMEYMDKTRKKTVQIPYSLVSKARLAVKL.

Belongs to the RimP family.

The protein resides in the cytoplasm. Its function is as follows. Required for maturation of 30S ribosomal subunits. In Streptococcus pneumoniae serotype 19F (strain G54), this protein is Ribosome maturation factor RimP.